The following is a 124-amino-acid chain: Large ribosomal subunit protein uL18 (124 aa).

It belongs to the universal ribosomal protein uL18 family. In terms of assembly, part of the 50S ribosomal subunit; part of the 5S rRNA/L5/L18/L25 subcomplex. Contacts the 5S and 23S rRNAs.

Functionally, this is one of the proteins that bind and probably mediate the attachment of the 5S RNA into the large ribosomal subunit, where it forms part of the central protuberance. This chain is Large ribosomal subunit protein uL18, found in Frankia casuarinae (strain DSM 45818 / CECT 9043 / HFP020203 / CcI3).